The primary structure comprises 897 residues: Autophagy-related protein 9 (897 aa).

At 1–256 the chain is on the cytoplasmic side; that stretch reads MEQSEDTIQH…DVYSYYLGNG (256 aa). Disordered stretches follow at residues 46-106, 112-131, and 195-224; these read RSGS…QELE, TIAK…QADS, and ENQL…RPSP. Positions 80–93 are enriched in polar residues; that stretch reads ENMTSYNGAQGSGS. Positions 214 to 224 are enriched in low complexity; that stretch reads ARLSSPSRPSP. The helical transmembrane segment at 257–277 threads the bilayer; it reads FYCIMIEKILNLLTLLFIVFI. Residues 278–314 are Lumenal-facing; it reads STYMSHCIDYSKLPNGHKFSDVRVDQCYETQITGTTK. Residues 315-335 form a helical membrane-spanning segment; it reads LLFWIFGVFVVLKVVQMYFDF. The Cytoplasmic portion of the chain corresponds to 336–431; it reads RRIHEIHNFY…PLYRTSTLTK (96 aa). Residues 432-452 lie within the membrane without spanning it; it reads TLEWNIHLCIIGFAFNEAGFL. Residues 453 to 472 lie on the Cytoplasmic side of the membrane; it reads KQSFLNPAQREFLSEELKKR. The helical transmembrane segment at 473–493 threads the bilayer; the sequence is FILAGFLNIILAPFLVVYFVL. At 494 to 558 the chain is on the lumenal side; the sequence is LYFFRYFNEY…NQFPNALGDY (65 aa). A helical transmembrane segment spans residues 559-579; the sequence is FFKFVKFISGSFVAILALMTV. At 580–661 the chain is on the cytoplasmic side; the sequence is LDPENFLNFE…QEFCKLYNLR (82 aa). An intramembrane segment occupies 662–682; that stretch reads VILLLRELASLIMTPFILWFS. The Cytoplasmic portion of the chain corresponds to 683–897; sequence LPNSAESIVD…QYYRKSDVGR (215 aa).

This sequence belongs to the ATG9 family. In terms of assembly, homotrimer; forms a homotrimer with a central pore that forms a path between the two membrane leaflets. Phosphorylated by ATG1. ATG1 phosphorylation is required for preautophagosome elongation.

It localises to the preautophagosomal structure membrane. Its subcellular location is the cytoplasmic vesicle membrane. The protein localises to the golgi apparatus membrane. It is found in the endoplasmic reticulum membrane. The enzyme catalyses a 1,2-diacyl-sn-glycero-3-phosphocholine(in) = a 1,2-diacyl-sn-glycero-3-phosphocholine(out). It carries out the reaction a 1,2-diacyl-sn-glycero-3-phospho-L-serine(in) = a 1,2-diacyl-sn-glycero-3-phospho-L-serine(out). It catalyses the reaction a 1,2-diacyl-sn-glycero-3-phosphoethanolamine(in) = a 1,2-diacyl-sn-glycero-3-phosphoethanolamine(out). The catalysed reaction is a 1,2-diacyl-sn-glycero-3-phospho-(1D-myo-inositol-3-phosphate)(in) = a 1,2-diacyl-sn-glycero-3-phospho-(1D-myo-inositol-3-phosphate)(out). Functionally, phospholipid scramblase involved in autophagy and cytoplasm to vacuole transport (Cvt) vesicle formation. Cycles between the preautophagosomal structure/phagophore assembly site (PAS) and the cytoplasmic vesicle pool and supplies membrane for the growing autophagosome. Lipid scramblase activity plays a key role in preautophagosomal structure/phagophore assembly by distributing the phospholipids that arrive through ATG2 from the cytoplasmic to the luminal leaflet of the bilayer, thereby driving autophagosomal membrane expansion. Required for mitophagy. Also involved in endoplasmic reticulum-specific autophagic process and is essential for the survival of cells subjected to severe ER stress. Different machineries are required for anterograde trafficking to the PAS during either the Cvt pathway or bulk autophagy and for retrograde trafficking. The chain is Autophagy-related protein 9 (ATG9) from Eremothecium gossypii (strain ATCC 10895 / CBS 109.51 / FGSC 9923 / NRRL Y-1056) (Yeast).